The sequence spans 434 residues: Serine hydroxymethyltransferase 2 (434 aa).

(6S)-5,6,7,8-tetrahydrofolate is bound by residues L136 and 140-142 (GHL). Residue K245 is modified to N6-(pyridoxal phosphate)lysine.

This sequence belongs to the SHMT family. Homodimer. Pyridoxal 5'-phosphate serves as cofactor.

The protein localises to the cytoplasm. The catalysed reaction is (6R)-5,10-methylene-5,6,7,8-tetrahydrofolate + glycine + H2O = (6S)-5,6,7,8-tetrahydrofolate + L-serine. The protein operates within one-carbon metabolism; tetrahydrofolate interconversion. Its pathway is amino-acid biosynthesis; glycine biosynthesis; glycine from L-serine: step 1/1. Its function is as follows. Catalyzes the reversible interconversion of serine and glycine with tetrahydrofolate (THF) serving as the one-carbon carrier. This reaction serves as the major source of one-carbon groups required for the biosynthesis of purines, thymidylate, methionine, and other important biomolecules. Also exhibits THF-independent aldolase activity toward beta-hydroxyamino acids, producing glycine and aldehydes, via a retro-aldol mechanism. In Rhodopseudomonas palustris (strain ATCC BAA-98 / CGA009), this protein is Serine hydroxymethyltransferase 2.